Here is a 437-residue protein sequence, read N- to C-terminus: Chromosomal replication initiator protein DnaA (437 aa).

A domain I, interacts with DnaA modulators region spans residues 1–67 (MKNKIIASLK…KVVKDILGKD (67 aa)). Positions 67–97 (DATYEITFKEIPYETKVESGPLIKKRPLLIT) are domain II. Residues 98–313 (PLNPKYTFEN…GAILRLIAYR (216 aa)) form a domain III, AAA+ region region. Positions 141, 143, 144, and 145 each coordinate ATP. The segment at 314–437 (NLYGTLNLSI…SKGFAQGESM (124 aa)) is domain IV, binds dsDNA.

This sequence belongs to the DnaA family. Oligomerizes as a right-handed, spiral filament on DNA at oriC.

The protein resides in the cytoplasm. Functionally, plays an essential role in the initiation and regulation of chromosomal replication. ATP-DnaA binds to the origin of replication (oriC) to initiate formation of the DNA replication initiation complex once per cell cycle. Binds the DnaA box (a 9 base pair repeat at the origin) and separates the double-stranded (ds)DNA. Forms a right-handed helical filament on oriC DNA; dsDNA binds to the exterior of the filament while single-stranded (ss)DNA is stabiized in the filament's interior. The ATP-DnaA-oriC complex binds and stabilizes one strand of the AT-rich DNA unwinding element (DUE), permitting loading of DNA polymerase. After initiation quickly degrades to an ADP-DnaA complex that is not apt for DNA replication. Binds acidic phospholipids. This Thermosipho melanesiensis (strain DSM 12029 / CIP 104789 / BI429) protein is Chromosomal replication initiator protein DnaA.